The sequence spans 177 residues: MDLLGPIHDILLVSLGSGIILGSLGVVLLTNPIYSAFSSGLVLVRISLFHILSNSYFVAAAQLLIYVGAINVLIIFAVMFMNGSEYYNNFHLWTVGDGISSVVCTSILFSLIATILDTSWYGIIWTTRSNQIIEQDLTSNVQQIGIHLSTDFFLPFELISIILLVALVGAIAMARAE.

Transmembrane regions (helical) follow at residues 10–30 (ILLVSLGSGIILGSLGVVLLT), 32–52 (PIYSAFSSGLVLVRISLFHIL), 61–81 (AQLLIYVGAINVLIIFAVMFM), 93–115 (WTVGDGISSVVCTSILFSLIATI), and 152–172 (FFLPFELISIILLVALVGAIA).

This sequence belongs to the complex I subunit 6 family. In terms of assembly, NDH is composed of at least 16 different subunits, 5 of which are encoded in the nucleus.

Its subcellular location is the plastid. It localises to the chloroplast thylakoid membrane. The enzyme catalyses a plastoquinone + NADH + (n+1) H(+)(in) = a plastoquinol + NAD(+) + n H(+)(out). The catalysed reaction is a plastoquinone + NADPH + (n+1) H(+)(in) = a plastoquinol + NADP(+) + n H(+)(out). NDH shuttles electrons from NAD(P)H:plastoquinone, via FMN and iron-sulfur (Fe-S) centers, to quinones in the photosynthetic chain and possibly in a chloroplast respiratory chain. The immediate electron acceptor for the enzyme in this species is believed to be plastoquinone. Couples the redox reaction to proton translocation, and thus conserves the redox energy in a proton gradient. The polypeptide is NAD(P)H-quinone oxidoreductase subunit 6, chloroplastic (ndhG) (Amborella trichopoda).